Reading from the N-terminus, the 518-residue chain is Glutamate--cysteine ligase (518 aa).

It belongs to the glutamate--cysteine ligase type 1 family. Type 1 subfamily.

The catalysed reaction is L-cysteine + L-glutamate + ATP = gamma-L-glutamyl-L-cysteine + ADP + phosphate + H(+). The protein operates within sulfur metabolism; glutathione biosynthesis; glutathione from L-cysteine and L-glutamate: step 1/2. This is Glutamate--cysteine ligase from Shigella sonnei (strain Ss046).